Reading from the N-terminus, the 311-residue chain is Cathepsin B (311 aa).

Positions 1-19 (MRVLLSLVVILFIINSAFA) are cleaved as a signal peptide. A propeptide spanning residues 20 to 78 (VKINIGRPTKSHKTIHHETWVEEQTDQFDNIKVGQLLGFKRSPNRPKLQIKSYDPLGVQ) is cleaved from the precursor. An N-linked (GlcNAc...) asparagine glycan is attached at asparagine 91. 5 disulfide bridges follow: cysteine 92-cysteine 121, cysteine 104-cysteine 145, cysteine 138-cysteine 191, cysteine 167-cysteine 195, and cysteine 175-cysteine 182. Cysteine 107 is a catalytic residue. A glycan (N-linked (GlcNAc...) asparagine) is linked at asparagine 198. Catalysis depends on residues histidine 261 and asparagine 281. A glycan (N-linked (GlcNAc...) asparagine) is linked at asparagine 290.

Belongs to the peptidase C1 family.

Its subcellular location is the lysosome. It carries out the reaction Hydrolysis of proteins with broad specificity for peptide bonds. Preferentially cleaves -Arg-Arg-|-Xaa bonds in small molecule substrates (thus differing from cathepsin L). In addition to being an endopeptidase, shows peptidyl-dipeptidase activity, liberating C-terminal dipeptides.. Its function is as follows. Thiol protease which is believed to participate in intracellular degradation and turnover of proteins. This is Cathepsin B (ctsB) from Dictyostelium discoideum (Social amoeba).